An 85-amino-acid polypeptide reads, in one-letter code: Large ribosomal subunit protein bL27 (85 aa).

Positions 1 to 20 (MAHKKAGGSTRNGRDSEAKR) are disordered.

This sequence belongs to the bacterial ribosomal protein bL27 family.

The protein is Large ribosomal subunit protein bL27 of Cronobacter sakazakii (strain ATCC BAA-894) (Enterobacter sakazakii).